The following is a 343-amino-acid chain: Palmitoyltransferase ZDHHC4 (343 aa).

The Lumenal segment spans residues 1-2 (MD). A helical membrane pass occupies residues 3–23 (FLVLFSFYLAFLLICVIMICI). The Cytoplasmic portion of the chain corresponds to 24 to 67 (FTKSQRLKAVVLGGAQVCARVTPQCFQRAVQTLLHQLFHTRHPA). The chain crosses the membrane as a helical span at residues 68–88 (FLALHLLLQGLVYAEYTYEVF). Over 89–95 (SYCRELE) the chain is Lumenal. A helical membrane pass occupies residues 96-116 (FSLPCLLLPYVLLSVNLVFFT). The Cytoplasmic portion of the chain corresponds to 117-193 (LTCSTNPGTI…NCIGAWNTGY (77 aa)). Residues 149 to 199 (SRCSTCDLRKPARSKHCRVCDRCVHRFDHHCVWVNNCIGAWNTGYFLIYLL) form the DHHC domain. Cys-179 (S-palmitoyl cysteine intermediate) is an active-site residue. A helical transmembrane segment spans residues 194–214 (FLIYLLTLTASAATIAILSAA). At 215-255 (FLLRLVAVSNLYQETYLDDLGRFQAVDTGFLIQHLFLAFPR) the chain is on the lumenal side. Residues 256–276 (IIFLLGFVIVLSLLLAGYLCF) traverse the membrane as a helical segment. The Cytoplasmic portion of the chain corresponds to 277–343 (ALYLAATNQT…ATPSYKKKKR (67 aa)). A Di-lysine motif motif is present at residues 340–343 (KKKR).

This sequence belongs to the DHHC palmitoyltransferase family. As to quaternary structure, interacts with CPT1A.

The protein resides in the endoplasmic reticulum membrane. It is found in the golgi apparatus membrane. Its subcellular location is the cell membrane. It catalyses the reaction L-cysteinyl-[protein] + hexadecanoyl-CoA = S-hexadecanoyl-L-cysteinyl-[protein] + CoA. Palmitoyltransferase that could catalyze the addition of palmitate onto protein substrates including the D(2) dopamine receptor DRD2, GSK3B or MAVS. Mediates GSK3B palmitoylation to prevent its AKT1-mediated phosphorylation leading to activation of the STAT3 signaling pathway. Also catalyzes MAVS palmitoylation which promotes its stabilization and activation by inhibiting 'Lys-48'- but facilitating 'Lys-63'-linked ubiquitination. The sequence is that of Palmitoyltransferase ZDHHC4 from Rattus norvegicus (Rat).